Consider the following 575-residue polypeptide: Sialate:O-sulfotransferase 1 (575 aa).

At 1-14 (MAKPFFRLQKFLRR) the chain is on the cytoplasmic side. A helical; Signal-anchor for type II membrane protein membrane pass occupies residues 15–35 (TQFLLFFLTAAYLMTGSLLLL). Topologically, residues 36–575 (QRVRVALPQG…TGLPREYVPR (540 aa)) are extracellular. WSC domains are found at residues 142–234 (RGTY…YRVD) and 245–340 (TATY…DTRC). 2 N-linked (GlcNAc...) asparagine glycosylation sites follow: N257 and N348.

It belongs to the WSCD family.

Its subcellular location is the golgi apparatus membrane. The enzyme catalyses a ganglioside GM1b + 3'-phosphoadenylyl sulfate = an 8-O-sulfo-ganglioside GM1b + adenosine 3',5'-bisphosphate + H(+). Sialate:O-sulfotransferase which catalyzes 8-O-sulfation at the Sia-glycan level using 3'-phosphoadenosine 5'-phosphosulfate (PAPS) as a donor, forming 8-O-sulfated Sia (Sia8S)-glycans. Displays selectivity toward glycolipids such as GM1 gangliosides. The polypeptide is Sialate:O-sulfotransferase 1 (WSCD1) (Homo sapiens (Human)).